A 532-amino-acid polypeptide reads, in one-letter code: Pentatricopeptide repeat-containing protein At5g66500, mitochondrial (532 aa).

Residues 1 to 33 constitute a mitochondrion transit peptide; the sequence is MFACLRIGRFIRLGNVTVKSTNLVLRCVFIRNF. PPR repeat units follow at residues 48–82, 83–117, 118–148, 149–183, 184–218, 223–248, 250–280, 281–314, 315–345, 346–380, 383–413, and 419–453; these read DLSS…SPDL, SSHT…GAET, GTIS…VEEK, DLVS…RVEI, SEFT…GRDL, TAMI…LNVH, DEVM…QRPN, VRVL…GFVS, DSKL…IPSK, SVVS…GSGV, NSVT…MKEK, and GTEH…DNQS. The interval 458-532 is type E motif; degenerate; that stretch reads IWVAVLSACS…VKTAGHSLFI (75 aa).

This sequence belongs to the PPR family. PCMP-E subfamily.

The protein localises to the mitochondrion. The protein is Pentatricopeptide repeat-containing protein At5g66500, mitochondrial (PCMP-E38) of Arabidopsis thaliana (Mouse-ear cress).